We begin with the raw amino-acid sequence, 107 residues long: Nucleoid-associated protein Xfasm12_1216 (107 aa).

The protein belongs to the YbaB/EbfC family. In terms of assembly, homodimer.

The protein localises to the cytoplasm. Its subcellular location is the nucleoid. Functionally, binds to DNA and alters its conformation. May be involved in regulation of gene expression, nucleoid organization and DNA protection. This Xylella fastidiosa (strain M12) protein is Nucleoid-associated protein Xfasm12_1216.